A 209-amino-acid chain; its full sequence is Small ribosomal subunit protein uS4 (209 aa).

Residues 98-164 (SRLDNVVYRG…TPFIVARETA (67 aa)) form the S4 RNA-binding domain.

The protein belongs to the universal ribosomal protein uS4 family. Part of the 30S ribosomal subunit. Contacts protein S5. The interaction surface between S4 and S5 is involved in control of translational fidelity.

In terms of biological role, one of the primary rRNA binding proteins, it binds directly to 16S rRNA where it nucleates assembly of the body of the 30S subunit. With S5 and S12 plays an important role in translational accuracy. In Frankia alni (strain DSM 45986 / CECT 9034 / ACN14a), this protein is Small ribosomal subunit protein uS4.